Here is a 329-residue protein sequence, read N- to C-terminus: Cytosolic arginine sensor for mTORC1 subunit 2 (329 aa).

ACT domains follow at residues 72 to 140 (ADAT…HTLS) and 262 to 322 (ELWK…HALK).

The protein belongs to the GATS family. Forms homodimers and heterodimers with CASTOR1. Interacts with the GATOR2 complex which is composed of MIOS, SEC13, SEH1L, WDR24 and WDR59; the interaction is not regulated by arginine.

The protein resides in the cytoplasm. Its subcellular location is the cytosol. Functions as a negative regulator of the TORC1 signaling pathway through the GATOR complex. As part of homodimers or heterodimers with CASTOR1, directly binds and inhibits the GATOR subcomplex GATOR2 and thereby mTORC1. Does not directly bind arginine, but binding of arginine to CASTOR1 disrupts the interaction of CASTOR2-containing heterodimers with GATOR2 which can in turn activate mTORC1 and the TORC1 signaling pathway. This Mus musculus (Mouse) protein is Cytosolic arginine sensor for mTORC1 subunit 2.